The sequence spans 436 residues: T-box transcription factor TBX6 (436 aa).

Residues 100–273 (LWKEFSSVGT…ANPFAKGFRE (174 aa)) constitute a DNA-binding region (T-box). Residues 271–284 (FRENGRNCKRERDA) are compositionally biased toward basic and acidic residues. 2 disordered regions span residues 271 to 339 (FREN…APAP) and 360 to 379 (PSHL…SGRS). Low complexity predominate over residues 325 to 339 (EQAPAPGEATAAPAP).

Forms a dimeric complex with DNA (in vitro). In terms of tissue distribution, expressed in fetal tail bud, posterior spinal tissue, intervertebral disk and testis. Also expressed in adult testis, kidney, lung, muscle and thymus.

The protein localises to the nucleus. In terms of biological role, T-box transcription factor that plays an essential role in the determination of the fate of axial stem cells: neural vs mesodermal. Acts in part by down-regulating, a specific enhancer (N1) of SOX2, to inhibit neural development. Seems to play also an essential role in left/right axis determination and acts through effects on Notch signaling around the node as well as through an effect on the morphology and motility of the nodal cilia. This Homo sapiens (Human) protein is T-box transcription factor TBX6 (TBX6).